A 151-amino-acid polypeptide reads, in one-letter code: 3-hydroxyacyl-[acyl-carrier-protein] dehydratase FabZ (151 aa).

Residue His56 is part of the active site.

Belongs to the thioester dehydratase family. FabZ subfamily.

The protein resides in the cytoplasm. It catalyses the reaction a (3R)-hydroxyacyl-[ACP] = a (2E)-enoyl-[ACP] + H2O. In terms of biological role, involved in unsaturated fatty acids biosynthesis. Catalyzes the dehydration of short chain beta-hydroxyacyl-ACPs and long chain saturated and unsaturated beta-hydroxyacyl-ACPs. The sequence is that of 3-hydroxyacyl-[acyl-carrier-protein] dehydratase FabZ from Rhodopseudomonas palustris (strain BisB18).